Reading from the N-terminus, the 367-residue chain is MALSAIGFEGYEKRLEVSFFEPSFFQDSKGLGLRALTRSQLDEILTPAACEIVSSLSNDHLDSYVLSESSFFVYPYKVIIKTCGTTKLLLSIPPLLKLAGELSLSVKSVKYTRGSFLCPGGQPFPHRSFSEEVSVLDGHFTKLGLNSVAYLMGNDDENKKWHVYAASAQTSSDCNNNVYTLEMCMTGLDKEKASVFYKNETGGENGSMTDNSGIRKILPKSQICDFEFEPCGYSMNSVEGDAISTIHVTPEDGFSYASFEAVGYDFNTLDLSQLVTRVLSCFEPKQFSVAVHSSVGSNAYKPEISVDLEDYGCRERTFESLGEESGTVMYQTFEKLGKYCGSPRSTLKCEWSSNNSCSSEDEKDEGI.

Residues glutamate 9 and glutamate 12 contribute to the active site. Residue serine 69 is the Schiff-base intermediate with substrate; via pyruvic acid of the active site. Position 69 is a pyruvic acid (Ser); by autocatalysis (serine 69). The active-site Proton donor; for catalytic activity is cysteine 83. Residues serine 234 and histidine 247 each act as proton acceptor; for processing activity in the active site.

This sequence belongs to the eukaryotic AdoMetDC family. Pyruvate is required as a cofactor. Is synthesized initially as an inactive proenzyme. Formation of the active enzyme involves a self-maturation process in which the active site pyruvoyl group is generated from an internal serine residue via an autocatalytic post-translational modification. Two non-identical subunits are generated from the proenzyme in this reaction, and the pyruvate is formed at the N-terminus of the alpha chain, which is derived from the carboxyl end of the proenzyme. The post-translation cleavage follows an unusual pathway, termed non-hydrolytic serinolysis, in which the side chain hydroxyl group of the serine supplies its oxygen atom to form the C-terminus of the beta chain, while the remainder of the serine residue undergoes an oxidative deamination to produce ammonia and the pyruvoyl group blocking the N-terminus of the alpha chain.

The catalysed reaction is S-adenosyl-L-methionine + H(+) = S-adenosyl 3-(methylsulfanyl)propylamine + CO2. It participates in amine and polyamine biosynthesis; S-adenosylmethioninamine biosynthesis; S-adenosylmethioninamine from S-adenosyl-L-methionine: step 1/1. The chain is S-adenosylmethionine decarboxylase proenzyme 3 (SAMDC3) from Brassica juncea (Indian mustard).